Reading from the N-terminus, the 302-residue chain is Alpha-ketoglutarate-dependent dioxygenase alkB homolog 4 (302 aa).

Position 2 is an N-acetylalanine (Ala-2). Thr-8 carries the post-translational modification Phosphothreonine. One can recognise a Fe2OG dioxygenase domain in the interval Pro-150–Ser-274. 3 residues coordinate Fe cation: His-169, Asp-171, and His-254. Arg-265 is a binding site for 2-oxoglutarate.

This sequence belongs to the alkB family. As to quaternary structure, interacts with ZFHX3, MLLT3, MLLT1, HSF4, EP300, TES, EIF3C, MTMR6 and PSMA6. Fe(2+) serves as cofactor. Widely expressed, with highest expression in pancreas, ovary and spleen.

It is found in the cytoplasm. Its subcellular location is the nucleus. The protein resides in the nucleolus. The protein localises to the midbody. The catalysed reaction is an N(6)-methyl-2'-deoxyadenosine in DNA + 2-oxoglutarate + O2 = a 2'-deoxyadenosine in DNA + formaldehyde + succinate + CO2. The enzyme catalyses N(6)-methyl-L-lysyl-[protein] + 2-oxoglutarate + O2 = L-lysyl-[protein] + formaldehyde + succinate + CO2. Functionally, dioxygenase that mediates demethylation of actin monomethylated at 'Lys-84' (K84me1), thereby acting as a regulator of actomyosin-processes. Demethylation of actin K84me1 is required for maintaining actomyosin dynamics supporting normal cleavage furrow ingression during cytokinesis and cell migration. In addition to proteins, also demethylates DNA: specifically demethylates DNA methylated on the 6th position of adenine (N(6)-methyladenosine) DNA, thereby regulating Polycomb silencing. This chain is Alpha-ketoglutarate-dependent dioxygenase alkB homolog 4, found in Homo sapiens (Human).